We begin with the raw amino-acid sequence, 477 residues long: ATP synthase subunit beta, chloroplastic (477 aa).

156–163 is an ATP binding site; the sequence is GGAGVGKT.

It belongs to the ATPase alpha/beta chains family. In terms of assembly, F-type ATPases have 2 components, CF(1) - the catalytic core - and CF(0) - the membrane proton channel. CF(1) has five subunits: alpha(3), beta(3), gamma(1), delta(1), epsilon(1). CF(0) has four main subunits: a(1), b(1), b'(1) and c(9-12).

The protein localises to the plastid. Its subcellular location is the chloroplast thylakoid membrane. It carries out the reaction ATP + H2O + 4 H(+)(in) = ADP + phosphate + 5 H(+)(out). Produces ATP from ADP in the presence of a proton gradient across the membrane. The catalytic sites are hosted primarily by the beta subunits. This is ATP synthase subunit beta, chloroplastic from Bigelowiella natans (Pedinomonas minutissima).